A 114-amino-acid chain; its full sequence is Translation initiation factor 1A (114 aa).

The region spanning 19 to 91 (SEFRLPGEGE…EKGDIVHKYE (73 aa)) is the S1-like domain.

Belongs to the eIF-1A family.

Seems to be required for maximal rate of protein biosynthesis. Enhances ribosome dissociation into subunits and stabilizes the binding of the initiator Met-tRNA(I) to 40 S ribosomal subunits. The polypeptide is Translation initiation factor 1A (eIF1A) (Pyrobaculum aerophilum (strain ATCC 51768 / DSM 7523 / JCM 9630 / CIP 104966 / NBRC 100827 / IM2)).